The chain runs to 127 residues: Large ribosomal subunit protein bL17 (127 aa).

Belongs to the bacterial ribosomal protein bL17 family. Part of the 50S ribosomal subunit. Contacts protein L32.

The polypeptide is Large ribosomal subunit protein bL17 (Lacticaseibacillus casei (strain BL23) (Lactobacillus casei)).